The following is a 162-amino-acid chain: Nucleotide-binding protein SCO4614 (162 aa).

The protein belongs to the YajQ family.

Its subcellular location is the cytoplasm. The protein localises to the nucleoid. In terms of biological role, nucleotide-binding protein. The chain is Nucleotide-binding protein SCO4614 from Streptomyces coelicolor (strain ATCC BAA-471 / A3(2) / M145).